The sequence spans 489 residues: MENKNKAEYYSPDDEDRDIDNQENIIHQFGKGRKEREDDKSKPSSPHHKDYMNIDNIEGGAVNVMVKRERSPPEHNSMASSSTHKEQDDQLASAKDEMREVMEENQRLRMHLDRMMKEYRNLQNQFHDIVQKETDQKSSSTTVNTSTTHHDHESDQEADQLVSLSLGRTTSDMKKDDLSKILKKDKVHDDEGVSNNNKSLDLGLDCKFETTPTECSPVNYSPENSLDDIQANKDENEETSNKNLKTMRNNGDGDDVSQQNPTKRARVSVRVRCDAPTMNDGCQWRKYGQKIAKGNPCPRAYYRCTVAPNCPVRKQVQRCAEDMSILITTYEGTHNHTLPLSATAMASTTSAAASMLLSGSSNSSDPNPQVTATTTTTPTTTTSANINGLNFYLSDTSKHHKSPYYFPNSSISASAPNSLPTITLDLTSTSSSSPSSLSHLNRMTQNFPPRYNYNNNNSTTNLNFSSVLESNSLPISWTNNYPNQTYNKK.

Disordered stretches follow at residues 1 to 100 (MENK…EMRE), 131 to 159 (QKETDQKSSSTTVNTSTTHHDHESDQEAD), and 234 to 267 (DENEETSNKNLKTMRNNGDGDDVSQQNPTKRARV). Basic and acidic residues-rich tracts occupy residues 32-52 (GRKEREDDKSKPSSPHHKDYM) and 83-100 (THKEQDDQLASAKDEMRE). Residues 84 to 132 (HKEQDDQLASAKDEMREVMEENQRLRMHLDRMMKEYRNLQNQFHDIVQK) adopt a coiled-coil conformation. Over residues 138–147 (SSSTTVNTST) the composition is skewed to low complexity. A DNA-binding region (WRKY) is located at residues 273 to 339 (CDAPTMNDGC…YEGTHNHTLP (67 aa)). 2 disordered regions span residues 356 to 381 (LLSGSSNSSDPNPQVTATTTTTPTTT) and 427 to 454 (TSTSSSSPSSLSHLNRMTQNFPPRYNYN). Low complexity-rich tracts occupy residues 371 to 381 (TATTTTTPTTT) and 427 to 438 (TSTSSSSPSSLS).

The protein belongs to the WRKY group II-b family.

The protein localises to the nucleus. In terms of biological role, in association with WRKY72A, contributes to basal defense against root-knot nematodes (RKNs) and potato aphids, as well as Mi-1-mediated gene-for-gene resistance to these pests. Both WRKY72A and WRKY72B are not required for gene-for-gene resistance mediated by Pto, another tomato R gene. This is WRKY transcription factor 72B from Solanum lycopersicum (Tomato).